A 493-amino-acid polypeptide reads, in one-letter code: Acetylcholine receptor subunit beta-type unc-29 (493 aa).

Residues 1 to 26 form the signal peptide; the sequence is MRTNRLSWILVLSVVIFLVIINTINA. N-linked (GlcNAc...) asparagine glycosylation is found at Asn-25 and Asn-50. The Extracellular portion of the chain corresponds to 27–232; that stretch reads SDDEERLMVD…QVRIRRKTLF (206 aa). Cys-155 and Cys-169 are oxidised to a cystine. The next 3 helical transmembrane spans lie at 233-254, 262-280, and 296-317; these read YTVV…VFFL, ITLT…LLVS, and YLLL…IINV. Residues 318–445 lie on the Cytoplasmic side of the membrane; sequence YFRGPRTHRM…WKYVAMIIDR (128 aa). The helical transmembrane segment at 446–466 threads the bilayer; it reads LLLYVFFGITVGGTCGILFSA.

The protein belongs to the ligand-gated ion channel (TC 1.A.9) family. Acetylcholine receptor (TC 1.A.9.1) subfamily. Interacts with lev-1. Component of nicotinic acetylcholine receptor composed of 2 non-alpha subunits lev-1 and unc-29, and 3 alpha subunits unc-38, unc-63 and lev-8. Interacts with oig-4. Interacts with crld-1.

The protein resides in the postsynaptic cell membrane. Its subcellular location is the cell membrane. In terms of biological role, non-alpha subunit of nicotinic acetylcholine receptor (nAChR). Involved in nAChR sensitivity to nicotine and levasimole. The sequence is that of Acetylcholine receptor subunit beta-type unc-29 from Caenorhabditis elegans.